Here is an 825-residue protein sequence, read N- to C-terminus: BEN domain-containing protein 3 (825 aa).

Acidic residues predominate over residues 1–11; the sequence is MNSTEISEDVE. Positions 1–35 are disordered; sequence MNSTEISEDVEEVLKNNPVKAEGSDATLDCSRNSR. Lysine 20 participates in a covalent cross-link: Glycyl lysine isopeptide (Lys-Gly) (interchain with G-Cter in SUMO); alternate. A Glycyl lysine isopeptide (Lys-Gly) (interchain with G-Cter in SUMO1); alternate cross-link involves residue lysine 20. A Glycyl lysine isopeptide (Lys-Gly) (interchain with G-Cter in SUMO2); alternate cross-link involves residue lysine 20. Residues lysine 39, lysine 54, lysine 56, lysine 71, lysine 126, lysine 127, lysine 135, lysine 140, lysine 156, and lysine 174 each participate in a glycyl lysine isopeptide (Lys-Gly) (interchain with G-Cter in SUMO2) cross-link. Residues 52 to 122 are disordered; it reads SSKRKQLDSD…EEEPSTEATV (71 aa). The Nuclear localization signal signature appears at 54 to 56; the sequence is KRK. Residues 239–340 form the BEN 1 domain; it reads PPPEYQLTAS…DFFSRFWAQR (102 aa). Serine 376 carries the phosphoserine modification. A BEN 2 domain is found at 384–484; sequence ASDHVVDTQD…DELEGLGLEG (101 aa). Lysine 424 participates in a covalent cross-link: Glycyl lysine isopeptide (Lys-Gly) (interchain with G-Cter in SUMO2). Serine 486 is modified (phosphoserine). Lysine 509 participates in a covalent cross-link: Glycyl lysine isopeptide (Lys-Gly) (interchain with G-Cter in SUMO); alternate. Lysine 509 is covalently cross-linked (Glycyl lysine isopeptide (Lys-Gly) (interchain with G-Cter in SUMO2); alternate). Residue lysine 525 forms a Glycyl lysine isopeptide (Lys-Gly) (interchain with G-Cter in SUMO2) linkage. The BEN 3 domain maps to 547–647; it reads GSDCLLSKEQ…ERCRRRDTEQ (101 aa). Lysine 697 is covalently cross-linked (Glycyl lysine isopeptide (Lys-Gly) (interchain with G-Cter in SUMO2)). Positions 712 to 813 constitute a BEN 4 domain; the sequence is VPSPYLLSDK…ERCRRPNRKK (102 aa).

As to quaternary structure, homooligomer, probably a homooctamer. Interacts with HDAC2 and HDAC3, but not HDAC1. Interacts with SALL4. Interacts with SMARCA5/SNF2H, BAZ2A/TIP5 and USP21. Interacts with the nucleosome remodeling and histone deacetylase (NuRD) repressor complex. Interacts (via BEN domains 1 and 3) with ERCC6L (via N-terminal TPR repeat); the interaction is direct. Sumoylated at Lys-20 by SUMO1 and at Lys-509 by SUMO1, SUMO2 and SUMO3. Sumoylation probably occurs sequentially, with that of Lys-20 preceding that of Lys-509. It does not alter association with heterochromatin, but is required for the repression of transcription.

Its subcellular location is the nucleus. The protein localises to the nucleolus. Its function is as follows. Transcriptional repressor which associates with the NoRC (nucleolar remodeling complex) complex and plays a key role in repressing rDNA transcription. The sumoylated form modulates the stability of the NoRC complex component BAZ2A/TIP5 by controlling its USP21-mediated deubiquitination. Binds to unmethylated major satellite DNA and is involved in the recruitment of the Polycomb repressive complex 2 (PRC2) to major satellites. Stimulates the ERCC6L translocase and ATPase activities. In Mus musculus (Mouse), this protein is BEN domain-containing protein 3 (Bend3).